The sequence spans 75 residues: Translation initiation factor IF-1, chloroplastic (75 aa).

An S1-like domain is found at 1–72 (MKKQNLIHAE…TKGRIIYRLS (72 aa)).

It belongs to the IF-1 family. As to quaternary structure, component of the 30S ribosomal translation pre-initiation complex which assembles on the 30S ribosome in the order IF-2 and IF-3, IF-1 and N-formylmethionyl-tRNA(fMet); mRNA recruitment can occur at any time during PIC assembly.

It is found in the plastid. It localises to the chloroplast. One of the essential components for the initiation of protein synthesis. Stabilizes the binding of IF-2 and IF-3 on the 30S subunit to which N-formylmethionyl-tRNA(fMet) subsequently binds. Helps modulate mRNA selection, yielding the 30S pre-initiation complex (PIC). Upon addition of the 50S ribosomal subunit IF-1, IF-2 and IF-3 are released leaving the mature 70S translation initiation complex. In Pinus koraiensis (Korean pine), this protein is Translation initiation factor IF-1, chloroplastic.